The chain runs to 329 residues: Malate dehydrogenase (329 aa).

11–17 lines the NAD(+) pocket; that stretch reads GAAGQIA. The substrate site is built by R92 and R98. Residues N105, Q112, and 129-131 each bind NAD(+); that span reads VGN. Residues N131 and R162 each coordinate substrate. H187 functions as the Proton acceptor in the catalytic mechanism.

This sequence belongs to the LDH/MDH superfamily. MDH type 2 family.

The catalysed reaction is (S)-malate + NAD(+) = oxaloacetate + NADH + H(+). Its function is as follows. Catalyzes the reversible oxidation of malate to oxaloacetate. This Akkermansia muciniphila (strain ATCC BAA-835 / DSM 22959 / JCM 33894 / BCRC 81048 / CCUG 64013 / CIP 107961 / Muc) protein is Malate dehydrogenase.